The following is a 211-amino-acid chain: Probable GTP-binding protein EngB (211 aa).

Positions E30–L204 constitute an EngB-type G domain. GTP contacts are provided by residues G38 to S45, G64 to L68, D82 to G85, T149 to D152, and L182 to A185. Mg(2+) is bound by residues S45 and T66.

It belongs to the TRAFAC class TrmE-Era-EngA-EngB-Septin-like GTPase superfamily. EngB GTPase family. Mg(2+) is required as a cofactor.

In terms of biological role, necessary for normal cell division and for the maintenance of normal septation. In Pseudomonas syringae pv. tomato (strain ATCC BAA-871 / DC3000), this protein is Probable GTP-binding protein EngB.